Here is a 302-residue protein sequence, read N- to C-terminus: Ribosomal RNA small subunit methyltransferase H (302 aa).

S-adenosyl-L-methionine is bound by residues 32 to 34, D51, F78, D97, and Q104; that span reads GGH.

Belongs to the methyltransferase superfamily. RsmH family.

The protein localises to the cytoplasm. The enzyme catalyses cytidine(1402) in 16S rRNA + S-adenosyl-L-methionine = N(4)-methylcytidine(1402) in 16S rRNA + S-adenosyl-L-homocysteine + H(+). In terms of biological role, specifically methylates the N4 position of cytidine in position 1402 (C1402) of 16S rRNA. The chain is Ribosomal RNA small subunit methyltransferase H from Nitratiruptor sp. (strain SB155-2).